The chain runs to 742 residues: MVTIQPDASEYGGQTVTGAAWPNIDESVLASAASDLEAVANHLRDNVVPSAGRQKMKLADSWEGKGADSALDEANAIIGEHEQNEVEAREAAAKLRRMEFAVAVAKTLANQTAEQVQNDCQRIMDEGQPSEGEDTRFERVATRIREGYDDNVRMVAEVSHQLAADLGIVPPEPWGHPGSPARTPQTPDQHPDGQLGTVDSGSSAPAPPPSLFAPPPPSRNADRPSQLGTEVAAKAEPTPSLETVQSGSPVPPDPLVGGEAPARSNPPFAQPHSDAPSTSGASTPPAVGPAPAPTTGSGTMRPQAPAQALPPGHLDSLSPATSNEISSNAVSPSAFGAKSGTPLEQFQKGLADAAKTGGSPQTLSTAPSQPLGAPPTTQPLGAAPPTAGPAAPPTTGGPPAPVAQAAGGPGGGAGPAPVAPPLSGGVPGGAVPLGPPPTPPPAAPVTTPPLASGAPVAPTGAAAGAAGGGGAQVAPIPVSAARAERDLAQRAVRRSGVDPMETARRIAAALNAPGMTNVEDFKFFWVTGLTADGKIVVANNYGIAYIPQQVHLPEQVYMASADESISPAERASWVNEPIVAVQRWAEHNGRVLRAVIATEDQLKNSDAGVHHEVLRPEDIPENGKMAGRDRLQVIAPDVSSQLAKIGDADLVSVLPPAPADSNPPEDRRKSLWDNVWKPLASRSAKRGERHLTAFVAYAAHAQEHALYAAHTAALPDEQRQAIREFIYWQHVGQLTADALAPA.

Residues 167–471 (GIVPPEPWGH…AAGAAGGGGA (305 aa)) are disordered. Over residues 205 to 218 (PAPPPSLFAPPPPS) the composition is skewed to pro residues. 2 stretches are compositionally biased toward polar residues: residues 318–331 (SPAT…NAVS) and 358–368 (GSPQTLSTAPS). The segment covering 386-401 (TAGPAAPPTTGGPPAP) has biased composition (pro residues). Residues 421-432 (PLSGGVPGGAVP) are compositionally biased toward low complexity. The segment covering 433–447 (LGPPPTPPPAAPVTT) has biased composition (pro residues). Residues 448 to 464 (PPLASGAPVAPTGAAAG) are compositionally biased toward low complexity.

May be involved in the ESX-1 / type VII specialized secretion system (T7SS), which exports several proteins including EsxA and EsxB. Involved in DNA conjugation in the recipient strain. This is an uncharacterized protein from Mycolicibacterium smegmatis (strain MKD8) (Mycobacterium smegmatis).